A 197-amino-acid polypeptide reads, in one-letter code: MAALGEPVRLERDICRAIELLEKLQRSGEVPPQKLQALQRVLQSEFCNAVREVYEHVYETVDISSSPEVRANATAKATVAAFAASEGHSHPRVVELPKTEEGLGFNIMGGKEQNSPIYISRIIPGGIADRHGGLKRGDQLLSVNGVSVEGEHHEKAVELLKAAQGKVKLVVRYTPKVLEEMESRFEKMRSAKRRQQT.

Alanine 2 carries the post-translational modification N-acetylalanine. A Kinase interacting site motif is present at residues alanine 2–aspartate 13. The L27 domain maps to leucine 10–serine 65. In terms of domain architecture, PDZ spans valine 93–proline 175.

The protein belongs to the lin-7 family. Forms a complex with CASK and APBA1 or CASKIN1. Component of the brain-specific heterotrimeric complex (LIN-10-LIN-2-LIN-7 complex) composed of at least APBA1, CASK, and LIN7, which associates with the motor protein KIF17 to transport vesicles along microtubules. Can also interact with other modular proteins containing protein-protein interaction domains like PALS1, PALS2, MPP7, DLG1, DLG2 and DLG3 through its L27 domain. Interacts with DLG4 and GRIN2B as well as CDH1 and CTNNB1, the channels KCNJ12/Kir2.2, KCNJ4/Kir2.3 and probably KCNJ2/Kir2.1 and SLC6A12/BGT-1 via its PDZ domain. The association of LIN7A with cadherin and beta-catenin is calcium-dependent, occurs at synaptic junctions and requires the actin cytoskeleton. Interacts with EGFR, ERBB2, ERBB3 and ERBB4 with both PDZ and KID domains. Associates with KIF17 via APBA1. Interacts with HTR4. Forms a tripartite complex composed of DLG1, MPP7 and LIN7 (LIN7A or LIN7C). Interacts with MAPK12.

The protein localises to the cell membrane. The protein resides in the basolateral cell membrane. It localises to the cell junction. Its subcellular location is the postsynaptic density membrane. It is found in the tight junction. The protein localises to the synapse. The protein resides in the synaptosome. Functionally, plays a role in establishing and maintaining the asymmetric distribution of channels and receptors at the plasma membrane of polarized cells. Forms membrane-associated multiprotein complexes that may regulate delivery and recycling of proteins to the correct membrane domains. The tripartite complex composed of LIN7 (LIN7A, LIN7B or LIN7C), CASK and APBA1 associates with the motor protein KIF17 to transport vesicles containing N-methyl-D-aspartate (NMDA) receptor subunit NR2B along microtubules. This complex may have the potential to couple synaptic vesicle exocytosis to cell adhesion in brain. Ensures the proper localization of GRIN2B (subunit 2B of the NMDA receptor) to neuronal postsynaptic density and may function in localizing synaptic vesicles at synapses where it is recruited by beta-catenin and cadherin. Required to localize Kir2 channels, GABA transporter (SLC6A12) and EGFR/ERBB1, ERBB2, ERBB3 and ERBB4 to the basolateral membrane of epithelial cells. In Bos taurus (Bovine), this protein is Protein lin-7 homolog C (LIN7C).